Here is a 697-residue protein sequence, read N- to C-terminus: Sialidase B (697 aa).

The signal sequence occupies residues Met-1–Ala-29. Substrate is bound at residue Arg-245. Catalysis depends on Asp-270, which acts as the Proton acceptor. BNR repeat units lie at residues Ser-280–Glu-291, Thr-462–Gln-473, and Leu-517–Lys-528. Residue Glu-541 is part of the active site. Arg-557 contacts substrate. Residues Met-566–Lys-577 form a BNR 4 repeat. Position 619 (Arg-619) interacts with substrate. Tyr-653 acts as the Nucleophile in catalysis.

This sequence belongs to the glycosyl hydrolase 33 family.

The catalysed reaction is Hydrolysis of alpha-(2-&gt;3)-, alpha-(2-&gt;6)-, alpha-(2-&gt;8)- glycosidic linkages of terminal sialic acid residues in oligosaccharides, glycoproteins, glycolipids, colominic acid and synthetic substrates.. The chain is Sialidase B (nanB) from Streptococcus pneumoniae serotype 4 (strain ATCC BAA-334 / TIGR4).